Here is a 328-residue protein sequence, read N- to C-terminus: Mitochondrial thiamine pyrophosphate carrier 1 (328 aa).

Solcar repeat units follow at residues 12 to 110 (GTRR…TTQL), 120 to 208 (PQPI…LRPV), and 221 to 316 (PPGS…ALKL). Helical transmembrane passes span 17–37 (VVLAGGIAGLISRFCIAPLDV), 79–99 (LTGLWKGNIPAELLYVCYGGI), 126–146 (FISGALGGGIATAATYPLDLL), 185–205 (SAAVGQIVPYMGLFFATYEAL), 227–247 (AAAGIVASVLAKTGVFPLDLV), and 291–308 (GLTVSLVKAAPASAVTMW).

The protein belongs to the mitochondrial carrier (TC 2.A.29) family.

The protein localises to the mitochondrion inner membrane. In terms of biological role, mitochondrial transporter that mediates uptake of thiamine pyrophosphate (ThPP) into mitochondria. This is Mitochondrial thiamine pyrophosphate carrier 1 (tpc1) from Emericella nidulans (strain FGSC A4 / ATCC 38163 / CBS 112.46 / NRRL 194 / M139) (Aspergillus nidulans).